Reading from the N-terminus, the 221-residue chain is uncharacterized protein (221 aa).

The next 5 helical transmembrane spans lie at 2 to 22 (FIAK…FFFV), 34 to 54 (LLTL…LAQA), 97 to 117 (AYGL…SNVI), 131 to 151 (ALDQ…FMGI), and 177 to 197 (ILWP…LQVI).

This sequence belongs to the peroxisomal membrane protein PXMP2/4 family.

It localises to the membrane. This is an uncharacterized protein from Schizosaccharomyces pombe (strain 972 / ATCC 24843) (Fission yeast).